The following is a 659-amino-acid chain: Acetyl-coenzyme A synthetase (659 aa).

A disordered region spans residues 1–35 (MATEQTKGQSSESISSVLSERRKFPPPEAFSSQSH). Residues 205 to 208 (RRGS), threonine 323, and asparagine 347 contribute to the CoA site. ATP is bound by residues 399–401 (GEP), 423–428 (DTWWQT), aspartate 512, and arginine 527. Position 535 (serine 535) interacts with CoA. Residue arginine 538 participates in ATP binding. 3 residues coordinate Mg(2+): valine 549, histidine 551, and valine 554. Lysine 621 carries the post-translational modification N6-acetyllysine.

It belongs to the ATP-dependent AMP-binding enzyme family. Mg(2+) serves as cofactor. Acetylated. Deacetylation by the SIR2-homolog deacetylase activates the enzyme.

The catalysed reaction is acetate + ATP + CoA = acetyl-CoA + AMP + diphosphate. Its function is as follows. Catalyzes the conversion of acetate into acetyl-CoA (AcCoA), an essential intermediate at the junction of anabolic and catabolic pathways. AcsA undergoes a two-step reaction. In the first half reaction, AcsA combines acetate with ATP to form acetyl-adenylate (AcAMP) intermediate. In the second half reaction, it can then transfer the acetyl group from AcAMP to the sulfhydryl group of CoA, forming the product AcCoA. The protein is Acetyl-coenzyme A synthetase of Chlorobaculum tepidum (strain ATCC 49652 / DSM 12025 / NBRC 103806 / TLS) (Chlorobium tepidum).